Here is a 283-residue protein sequence, read N- to C-terminus: Release factor glutamine methyltransferase (283 aa).

2 residues coordinate S-adenosyl-L-methionine: Asp143 and Asn189. 189–192 (NPPY) contributes to the substrate binding site.

It belongs to the protein N5-glutamine methyltransferase family. PrmC subfamily.

It carries out the reaction L-glutaminyl-[peptide chain release factor] + S-adenosyl-L-methionine = N(5)-methyl-L-glutaminyl-[peptide chain release factor] + S-adenosyl-L-homocysteine + H(+). Functionally, methylates the class 1 translation termination release factors RF1/PrfA and RF2/PrfB on the glutamine residue of the universally conserved GGQ motif. This Clostridium botulinum (strain Hall / ATCC 3502 / NCTC 13319 / Type A) protein is Release factor glutamine methyltransferase.